We begin with the raw amino-acid sequence, 142 residues long: Small ribosomal subunit protein uS12 (142 aa).

Belongs to the universal ribosomal protein uS12 family. As to quaternary structure, part of the 30S ribosomal subunit.

In terms of biological role, with S4 and S5 plays an important role in translational accuracy. Located at the interface of the 30S and 50S subunits. The protein is Small ribosomal subunit protein uS12 of Archaeoglobus fulgidus (strain ATCC 49558 / DSM 4304 / JCM 9628 / NBRC 100126 / VC-16).